A 595-amino-acid polypeptide reads, in one-letter code: 73 kDa paraflagellar rod protein (595 aa).

Positions 294–317 (DAEATKRHAANKEKSDRYIRENED) are disordered. Residues 317 to 337 (DRQEETWNKIQDLERQLQKLG) form a calmodulin-binding region.

As to quaternary structure, heterodimer of a 69 kDa and a 73 kDa protein.

The protein resides in the cell projection. It is found in the cilium. Its subcellular location is the flagellum. The protein localises to the cytoplasm. It localises to the cytoskeleton. Its function is as follows. Major component of the paraflagellar rod (PFR). The PFR is a highly ordered lattices of fibrous proteins that are located inside the flagellum and assume a fixed orientation with respect to the microtubular axoneme. The chain is 73 kDa paraflagellar rod protein (PFRC) from Trypanosoma brucei brucei.